A 583-amino-acid polypeptide reads, in one-letter code: uncharacterized protein (583 aa).

Over residues 1–38 (MGQGESIPSRQIQRDASMQAVSSESENINDSDRQNSGF) the composition is skewed to polar residues. Disordered stretches follow at residues 1-39 (MGQG…SGFS), 53-124 (GLRR…AIPQ), 156-197 (TQNN…TAIG), and 362-452 (NSGS…QTDH). A compositionally biased stretch (basic and acidic residues) spans 70–80 (GNRDRTTERSA). The segment covering 88–102 (SLLNRNSPSLRSLSP) has biased composition (low complexity). Polar residues-rich tracts occupy residues 156 to 165 (TQNNQSTLAS), 172 to 191 (VSSS…NLES), 384 to 408 (LISS…NENV), and 420 to 452 (ASTA…QTDH). Residues 525 to 568 (CLVCLSNFELNDECRRLKQCNHFFHRECIDQWLTSSQNSCPLCR) form an RING-type zinc finger. Residue Ser580 is modified to Phosphoserine.

It is found in the membrane. This is an uncharacterized protein from Schizosaccharomyces pombe (strain 972 / ATCC 24843) (Fission yeast).